The following is a 473-amino-acid chain: Pre-mRNA-splicing factor PRP46 (473 aa).

The segment covering 1–14 has biased composition (polar residues); the sequence is MSTSLETPSGTSAG. Disordered stretches follow at residues 1-21 and 103-126; these read MSTS…VASG and GPNV…QAVA. WD repeat units follow at residues 180-219, 222-261, 264-303, 306-347, 349-388, 391-429, and 440-473; these read GHMG…LKLS, GHIS…VIRH, GHFS…NIFT, GHTS…NTLT, HKKS…FVNN, GHEA…PFQH, and DAEA…SEQA.

Belongs to the WD repeat PRL1/PRL2 family. Associated with the spliceosome.

It localises to the cytoplasm. The protein resides in the nucleus. In terms of biological role, involved in pre-mRNA splicing and required for cell cycle progression at G2/M. This Cryptococcus neoformans var. neoformans serotype D (strain B-3501A) (Filobasidiella neoformans) protein is Pre-mRNA-splicing factor PRP46 (PRP46).